Reading from the N-terminus, the 204-residue chain is Ribosome maturation factor RimM (204 aa).

In terms of domain architecture, PRC barrel spans 117–192 (DEDEFFSADL…EVTIDPPDDL (76 aa)).

This sequence belongs to the RimM family. As to quaternary structure, binds ribosomal protein uS19.

The protein resides in the cytoplasm. An accessory protein needed during the final step in the assembly of 30S ribosomal subunit, possibly for assembly of the head region. Essential for efficient processing of 16S rRNA. May be needed both before and after RbfA during the maturation of 16S rRNA. It has affinity for free ribosomal 30S subunits but not for 70S ribosomes. This Methylobacterium nodulans (strain LMG 21967 / CNCM I-2342 / ORS 2060) protein is Ribosome maturation factor RimM.